The sequence spans 414 residues: 3-phosphoshikimate 1-carboxyvinyltransferase (414 aa).

3 residues coordinate 3-phosphoshikimate: lysine 20, serine 21, and arginine 25. Residue lysine 20 coordinates phosphoenolpyruvate. Phosphoenolpyruvate is bound by residues glycine 88 and arginine 116. Positions 157, 158, 159, 183, 297, and 324 each coordinate 3-phosphoshikimate. A phosphoenolpyruvate-binding site is contributed by glutamine 159. Aspartate 297 acts as the Proton acceptor in catalysis. The phosphoenolpyruvate site is built by arginine 328, arginine 369, and lysine 395.

Belongs to the EPSP synthase family. As to quaternary structure, monomer.

It localises to the cytoplasm. The enzyme catalyses 3-phosphoshikimate + phosphoenolpyruvate = 5-O-(1-carboxyvinyl)-3-phosphoshikimate + phosphate. It participates in metabolic intermediate biosynthesis; chorismate biosynthesis. Catalyzes the transfer of the enolpyruvyl moiety of phosphoenolpyruvate (PEP) to the 5-hydroxyl of shikimate-3-phosphate (S3P) to produce enolpyruvyl shikimate-3-phosphate and inorganic phosphate. The protein is 3-phosphoshikimate 1-carboxyvinyltransferase of Caldivirga maquilingensis (strain ATCC 700844 / DSM 13496 / JCM 10307 / IC-167).